The sequence spans 61 residues: Double gene block protein 2 (61 aa).

Topologically, residues 1–12 (MACCRCDSSPGD) are cytoplasmic. Residues 13–33 (YSGALLILFISFVFFYITSLS) traverse the membrane as a helical; Signal-anchor for type II membrane protein segment. Topologically, residues 34-61 (PQGNTYVHHFDSSSVKTQYVGISTNGDG) are lumenal.

This sequence belongs to the gammacarmovirus double gene block protein 2 family.

It is found in the host endoplasmic reticulum membrane. Its function is as follows. Cell-to-cell movement function. This chain is Double gene block protein 2, found in Melon necrotic spot virus (MNSV).